The following is a 189-amino-acid chain: Pyridoxal 5'-phosphate synthase subunit PdxT (189 aa).

47–49 (GES) is an L-glutamine binding site. The active-site Nucleophile is the cysteine 79. L-glutamine contacts are provided by residues arginine 106 and 135 to 136 (IR). Active-site charge relay system residues include histidine 171 and glutamate 173.

It belongs to the glutaminase PdxT/SNO family. As to quaternary structure, in the presence of PdxS, forms a dodecamer of heterodimers. Only shows activity in the heterodimer.

The catalysed reaction is aldehydo-D-ribose 5-phosphate + D-glyceraldehyde 3-phosphate + L-glutamine = pyridoxal 5'-phosphate + L-glutamate + phosphate + 3 H2O + H(+). The enzyme catalyses L-glutamine + H2O = L-glutamate + NH4(+). It functions in the pathway cofactor biosynthesis; pyridoxal 5'-phosphate biosynthesis. In terms of biological role, catalyzes the hydrolysis of glutamine to glutamate and ammonia as part of the biosynthesis of pyridoxal 5'-phosphate. The resulting ammonia molecule is channeled to the active site of PdxS. This Caldanaerobacter subterraneus subsp. tengcongensis (strain DSM 15242 / JCM 11007 / NBRC 100824 / MB4) (Thermoanaerobacter tengcongensis) protein is Pyridoxal 5'-phosphate synthase subunit PdxT.